The primary structure comprises 1488 residues: MIERGKFRSLTLINWNGFFARTFDLDELVTTLSGGNGAGKSTTMAAFVTALIPDLTLLHFRNTTEAGATSGSRDKGLHGKLKAGVCYSMLDTINSRHQRVVVGVRLQQVAGRDRKVDIKPFAIQGLPMSVQPTQLVTETLNERQARVLSLAELKDKLDEMEGVQFKQFNSITDYHSLMFDLGIIARRLRSASDRSKFYRLIEASLYGGISSAITRSLRDYLLPENSGVRKAFQDMEAALRENRLTLEAIRVTQSDRDLFKHLISEATDYVAADYMRHANERRVHLDQALAFRRELYTSRKQLAAEQYKHVDMARELGEHNGAEGSLEADYQAASDHLNLVQTALRQQEKIERYEADLEELQIRLEEQNEVVAEAAEMQDENEARAEAAELEVDELKSQLADDQQALDVQQTRAIQYNQAISALARAKELCHLPDLTPESAAEWLDTFQAKEQEATEKLLSLEQKMSVAQTAHSQFEQAYQLVAAINGPLARSEAWDVARELLRDGVNQRHLAEQVQPLRMRLSELEQRLREQQEAERLLAEFCKRQGKNFDIDELEALHQELEARIASLSESVSSASEQRMALRQEQEQLQSRIQHLMRRAPVWLAAQNSLNQLSEQCGEEFTSSQEVTEYLQQLLEREREAIVERDEVGARKNAVDEEIERLSQPGGAEDQRLNALAERFGGVLLSEIYDDVSLEDAPYFSALYGPSRHAIVVPDLSQIAEQLEGLTDCPEDLYLIEGDPQSFDDSVFSVDELEKAVVVKIADRQWRYSRFPSLPIFGRAARENRIESLHAEREVLSERFATLSFDVQKTQRLHQAFSRFIGSHLSVAFEDDPEAEIRRLNGRRVELERALATHENDNQQQRLQFEQAKEGVSALNRLLPRLNLLADETLADRVDEIQERLDEAQEAARFVQQYGNQLAKLEPVVSVLQSDPEQFEQLKEDYAWSQQMQRDARQQAFALAEVVERRAHFSYSDSAEMLSGNSDLNEKLRQRLEQAEAERTRAREALRSHAAQLSQYSQVLASLKSSYDTKKELLNDLQRELQDIGVRADSGAEERARQRRDELHAQLSNNRSRRNQLEKALTFCEAEMENLTRKLRKLERDYHEMREQVVTAKAGWCAVMRMVKDNGVERRLHRRELAYLSADELRSMSDKALGALRLAIADNEHLRDVLRLSEDPKRPERKIQFFVAVYQHLRERIRQDIIRTDDPVEAIEQMEIELSRLTEELTSREQKLAISSRSVANIIRKTIQREQNRIRMLNQGLQSVSFGQVNSVRLNVNVRETHATLLDVLSEQQEQHQDLFNSNRLTFSEALAKLYQRLNPQIDMGQRTPQTIGEELLDYRNYLEMEVEVNRGSDGWLRAESGALSTGEAIGTGMSILVMVVQSWEDEARRLRGKDISPCRLLFLDEAARLDARSIATLFELCERLQMQLIIAAPENISPEKGTTYKLVRKVFQNTEHVHVVGLRGFAPQLPETLPGTQTEDTPSEAS.

Position 34–41 (34–41 (GGNGAGKS)) interacts with ATP. Coiled-coil stretches lie at residues 326 to 413 (LEAD…QTRA), 444 to 472 (LDTFQAKEQEATEKLLSLEQKMSVAQTAH), and 509 to 602 (RHLA…RRAP). Positions 666–783 (PGGAEDQRLN…SLPIFGRAAR (118 aa)) are flexible hinge. Coiled coils occupy residues 835 to 923 (EAEI…AKLE), 977 to 1116 (EMLS…AKAG), and 1209 to 1265 (VEAI…LQSV).

Belongs to the SMC family. MukB subfamily. As to quaternary structure, homodimerization via its hinge domain. Binds to DNA via its C-terminal region. Interacts, and probably forms a ternary complex, with MukE and MukF via its C-terminal region. The complex formation is stimulated by calcium or magnesium. Interacts with tubulin-related protein FtsZ.

It localises to the cytoplasm. It is found in the nucleoid. Its function is as follows. Plays a central role in chromosome condensation, segregation and cell cycle progression. Functions as a homodimer, which is essential for chromosome partition. Involved in negative DNA supercoiling in vivo, and by this means organize and compact chromosomes. May achieve or facilitate chromosome segregation by condensation DNA from both sides of a centrally located replisome during cell division. This is Chromosome partition protein MukB from Salmonella paratyphi C (strain RKS4594).